The following is a 23-amino-acid chain: Thymidine phosphorylase (23 aa).

Belongs to the thymidine/pyrimidine-nucleoside phosphorylase family. In terms of assembly, homodimer.

It carries out the reaction thymidine + phosphate = 2-deoxy-alpha-D-ribose 1-phosphate + thymine. In terms of biological role, the enzymes which catalyze the reversible phosphorolysis of pyrimidine nucleosides are involved in the degradation of these compounds and in their utilization as carbon and energy sources, or in the rescue of pyrimidine bases for nucleotide synthesis. The protein is Thymidine phosphorylase (deoA) of Lacticaseibacillus rhamnosus (Lactobacillus rhamnosus).